We begin with the raw amino-acid sequence, 494 residues long: V-type proton ATPase subunit B (494 aa).

Belongs to the ATPase alpha/beta chains family. V-ATPase is a heteromultimeric enzyme composed of a peripheral catalytic V1 complex (main components: subunits A, B, C, D, E, and F) attached to an integral membrane V0 proton pore complex (main component: the proteolipid protein).

Functionally, non-catalytic subunit of the peripheral V1 complex of vacuolar ATPase. V-ATPase is responsible for acidifying a variety of intracellular compartments in eukaryotic cells. This is V-type proton ATPase subunit B (VAPB) from Plasmodium falciparum.